A 201-amino-acid chain; its full sequence is CASP-like protein 2A1 (201 aa).

The interval 1-27 (MEKRDKGSSPMATMMGSRDENEDVENT) is disordered. Residues 1–30 (MEKRDKGSSPMATMMGSRDENEDVENTTRT) are Cytoplasmic-facing. The helical transmembrane segment at 31 to 51 (AETMLRLVPMALCVSALVVML) threads the bilayer. Topologically, residues 52–72 (KNTQTNDYGSLSYSDLGAFRY) are extracellular. A helical transmembrane segment spans residues 73–93 (LVHVNGICAGYSLLSAVIVAM). Topologically, residues 94–101 (PRASTMPR) are cytoplasmic. A helical transmembrane segment spans residues 102–122 (AWAFFLLDQVLTYVILAAGTV). Over 123-152 (STEVLYLASKGDTTITWSEACVSFGGFCHK) the chain is Extracellular. The helical transmembrane segment at 153 to 173 (ALISIVITFVVVICYAALSLL) threads the bilayer. At 174-201 (SSYKLFSKYDSPVLTYPGKGIEIATFHG) the chain is on the cytoplasmic side.

Belongs to the Casparian strip membrane proteins (CASP) family. In terms of assembly, homodimer and heterodimers.

The protein resides in the cell membrane. This is CASP-like protein 2A1 from Populus trichocarpa (Western balsam poplar).